Reading from the N-terminus, the 488-residue chain is Multidrug resistance outer membrane protein MdtP (488 aa).

The N-terminal stretch at Met-1–Gly-23 is a signal peptide. Cys-24 carries the N-palmitoyl cysteine lipid modification. A lipid anchor (S-diacylglycerol cysteine) is attached at Cys-24.

Belongs to the outer membrane factor (OMF) (TC 1.B.17) family. Could be part of a tripartite efflux system composed of MdtN, MdtO and MdtP.

The protein resides in the cell outer membrane. Functionally, could be involved in resistance to puromycin, acriflavine and tetraphenylarsonium chloride. The chain is Multidrug resistance outer membrane protein MdtP (mdtP) from Escherichia coli O6:H1 (strain CFT073 / ATCC 700928 / UPEC).